We begin with the raw amino-acid sequence, 89 residues long: Small ribosomal subunit protein uS15 (89 aa).

Belongs to the universal ribosomal protein uS15 family. As to quaternary structure, part of the 30S ribosomal subunit. Forms a bridge to the 50S subunit in the 70S ribosome, contacting the 23S rRNA.

Functionally, one of the primary rRNA binding proteins, it binds directly to 16S rRNA where it helps nucleate assembly of the platform of the 30S subunit by binding and bridging several RNA helices of the 16S rRNA. Its function is as follows. Forms an intersubunit bridge (bridge B4) with the 23S rRNA of the 50S subunit in the ribosome. In Bacillus pumilus (strain SAFR-032), this protein is Small ribosomal subunit protein uS15.